The primary structure comprises 126 residues: Small ribosomal subunit protein uS13 (126 aa).

A disordered region spans residues 92-126; it reads HRRGLPVRGQRTKTNARTRKGPKKTVAGKKKATRK.

This sequence belongs to the universal ribosomal protein uS13 family. Part of the 30S ribosomal subunit. Forms a loose heterodimer with protein S19. Forms two bridges to the 50S subunit in the 70S ribosome.

Functionally, located at the top of the head of the 30S subunit, it contacts several helices of the 16S rRNA. In the 70S ribosome it contacts the 23S rRNA (bridge B1a) and protein L5 of the 50S subunit (bridge B1b), connecting the 2 subunits; these bridges are implicated in subunit movement. Contacts the tRNAs in the A and P-sites. The polypeptide is Small ribosomal subunit protein uS13 (Deinococcus deserti (strain DSM 17065 / CIP 109153 / LMG 22923 / VCD115)).